The chain runs to 447 residues: C4-dicarboxylate transport protein (447 aa).

The next 9 helical transmembrane spans lie at 13–33, 49–69, 81–101, 149–169, 189–209, 227–247, 302–322, 336–356, and 357–377; these read SLYF…HYWP, LIKM…IAGM, LALL…LLIV, AFAK…GFAL, VLFA…FGAM, LMGT…GLIA, GYSF…VFIA, TLLA…GSGF, and IVLA…LALI. Positions 422 to 447 are disordered; the sequence is ETEAEANEPEAVLDEIDQHMPVPAAR. Acidic residues predominate over residues 425 to 436; the sequence is AEANEPEAVLDE.

This sequence belongs to the dicarboxylate/amino acid:cation symporter (DAACS) (TC 2.A.23) family.

Its subcellular location is the cell inner membrane. Responsible for the transport of dicarboxylates such as succinate, fumarate, and malate from the periplasm across the membrane. This is C4-dicarboxylate transport protein from Leptothrix cholodnii (strain ATCC 51168 / LMG 8142 / SP-6) (Leptothrix discophora (strain SP-6)).